Consider the following 349-residue polypeptide: Magnesium-protoporphyrin IX monomethyl ester [oxidative] cyclase (349 aa).

Low complexity predominate over residues 1–10 (MTATTATAPA). The tract at residues 1 to 23 (MTATTATAPAMRGGGRNELPPHL) is disordered.

The protein belongs to the AcsF family. Fe cation is required as a cofactor.

It catalyses the reaction Mg-protoporphyrin IX 13-monomethyl ester + 3 NADPH + 3 O2 + 2 H(+) = 3,8-divinyl protochlorophyllide a + 3 NADP(+) + 5 H2O. The protein operates within porphyrin-containing compound metabolism; chlorophyll biosynthesis (light-independent). Its function is as follows. Catalyzes the formation of the isocyclic ring in chlorophyll biosynthesis. Mediates the cyclase reaction, which results in the formation of divinylprotochlorophyllide (Pchlide) characteristic of all chlorophylls from magnesium-protoporphyrin IX 13-monomethyl ester (MgPMME). The sequence is that of Magnesium-protoporphyrin IX monomethyl ester [oxidative] cyclase from Prochlorococcus marinus (strain MIT 9303).